The following is a 255-amino-acid chain: Pimeloyl-[acyl-carrier protein] methyl ester esterase (255 aa).

Substrate is bound by residues Trp-18, 78 to 79, and 139 to 143; these read SL and FLALD. Residue Ser-78 is the Nucleophile of the active site. Catalysis depends on residues Asp-203 and His-233. His-233 provides a ligand contact to substrate.

The protein belongs to the AB hydrolase superfamily. Carboxylesterase BioH family. As to quaternary structure, monomer.

It localises to the cytoplasm. The enzyme catalyses 6-carboxyhexanoyl-[ACP] methyl ester + H2O = 6-carboxyhexanoyl-[ACP] + methanol + H(+). It functions in the pathway cofactor biosynthesis; biotin biosynthesis. Its function is as follows. The physiological role of BioH is to remove the methyl group introduced by BioC when the pimeloyl moiety is complete. It allows to synthesize pimeloyl-ACP via the fatty acid synthetic pathway through the hydrolysis of the ester bonds of pimeloyl-ACP esters. The chain is Pimeloyl-[acyl-carrier protein] methyl ester esterase from Xylella fastidiosa (strain 9a5c).